The chain runs to 258 residues: MILVFDVGNTNIVLGVYEQKDLIYHWRISTDKSRTVDEYAVIIKNLFDLNGLDMSRIKAVVMSSVVPPVMPTLESLARKYFDVEPLVIGPGVKTGMPIVYDNPREVGADRIVNAVAAYHKYGGPLVIVDFGTATTFCAISKRGEYLGGAIAPGVGISTEALFQRASKLPRIEIVKPKSIIAKNTVAGMQSGIYYGYTGQVDRIVTLMKQELGRDTRVIATGGLAELIQEDSQEIETVDPFLTLEGLLLIYERNSNQQP.

Residue 6 to 13 (DVGNTNIV) coordinates ATP. Substrate is bound by residues Y100 and 107-110 (GADR). D109 functions as the Proton acceptor in the catalytic mechanism. Residue D129 participates in K(+) binding. T132 lines the ATP pocket. Residue T184 coordinates substrate.

It belongs to the type III pantothenate kinase family. In terms of assembly, homodimer. NH4(+) is required as a cofactor. Requires K(+) as cofactor.

It localises to the cytoplasm. It catalyses the reaction (R)-pantothenate + ATP = (R)-4'-phosphopantothenate + ADP + H(+). It participates in cofactor biosynthesis; coenzyme A biosynthesis; CoA from (R)-pantothenate: step 1/5. In terms of biological role, catalyzes the phosphorylation of pantothenate (Pan), the first step in CoA biosynthesis. This Desulfitobacterium hafniense (strain DSM 10664 / DCB-2) protein is Type III pantothenate kinase.